We begin with the raw amino-acid sequence, 140 residues long: Ribosome maturation factor RimP (140 aa).

The protein belongs to the RimP family.

The protein localises to the cytoplasm. In terms of biological role, required for maturation of 30S ribosomal subunits. This chain is Ribosome maturation factor RimP, found in Campylobacter jejuni subsp. jejuni serotype O:6 (strain 81116 / NCTC 11828).